A 345-amino-acid polypeptide reads, in one-letter code: ATP-dependent kinase YFH7 (345 aa).

31–39 (GPPGSGKST) contacts ATP.

This sequence belongs to the YFH7 family.

ATP-dependent kinase that could be involved in endoplasmic reticulum membrane assembly. The polypeptide is ATP-dependent kinase YFH7 (YFH7) (Candida glabrata (strain ATCC 2001 / BCRC 20586 / JCM 3761 / NBRC 0622 / NRRL Y-65 / CBS 138) (Yeast)).